The following is a 371-amino-acid chain: dTDP-4-amino-4,6-dideoxy-D-glucose transaminase (371 aa).

Lys186 is subject to N6-(pyridoxal phosphate)lysine.

It belongs to the DegT/DnrJ/EryC1 family. Pyridoxal 5'-phosphate is required as a cofactor.

The enzyme catalyses dTDP-4-amino-4,6-dideoxy-D-glucose + 2-oxoglutarate = dTDP-4-dehydro-6-deoxy-alpha-D-glucose + L-glutamate. It functions in the pathway bacterial outer membrane biogenesis; lipopolysaccharide biosynthesis. Catalyzes the conversion of dTDP-4-dehydro-6-deoxy-D-glucose (dTDP-D-Glc4O) to dTDP-4-amino-4,6-dideoxy-D-glucose (dTDP-D-Qui4N). This Escherichia coli protein is dTDP-4-amino-4,6-dideoxy-D-glucose transaminase (vioA).